Reading from the N-terminus, the 923-residue chain is MGRGTGELGRAERLPVLFLFLLSLFCPALCEQIRYRIPEEMPKGSVVGNLATDLGFSVQELPTRKLRVSSEKPYFTVSAESGELLVSSRLDREEICGKKPACALEFEAVAENPLNFYHVNVEIEDINDHTPKFTQNSFELQISESAQPGTRFILEVAEDADIGLNSLQKYKLSLNPSFSLIIKEKQDGSKYPELALEKTLDREQQSYHRLVLTALDGGNPPLSGTTELRIQVTDANDNPPVFNRDVYRVSLRENVPPGTTVLQVSATDQDEGINSEITYSFYRTGQIFSLNSKSGEITTQKKLDFEETKEYSMVVEGRDGGGLVAQCTVEINIQDENDNSPEVTFHSLLEMILENAVPGTLIALIKIHDQDSGENGEVNCQLQGEVPFKIISSSKNSYKLVTDGTLDREQTPEYNVTITATDRGKPPLSSSISVILHIRDVNDNAPVFHQASYLVSVPENNPPGASIAQVCASDLDLGLNGQVSYSIMASDLEPLALASYVSMSAQSGVVFAQRAFDYEQLRTFELTLQARDQGSPALSANVSLRVLVGDRNDNAPRVLYPALGPDGSALFDMVPRAAEPGYLVTKVVAVDADSGHNAWLSYHVLHASEPGLFSLGLRTGEVRTARALGDRDAARQRLLVAVRDGGQPPLSATATLHLVFADSLQEVLPDITDRPVPSDPQAELQFYLVVALALISVLFLLAVILAIALRLRRSSSPAAWSCFQPGLCVKSGPVVPPNYSEGTLPYSYNLCVAHTGKTEFNFLKCSEQLSSEQDILCGDSSGALFPLCNSSESTSHPELQAPPNTDWRFSQAQRPGTSGSQNGDDTGTWPNNQFDTEMLQAMILASASEAADGSSTLGGGAGTMGLSARYGPQFTLQHVPDYRQNVYIPGSNATLTNAAGKRDGKAPAGGNGNKKKSGKKEKK.

The first 30 residues, 1–30, serve as a signal peptide directing secretion; it reads MGRGTGELGRAERLPVLFLFLLSLFCPALC. 6 Cadherin domains span residues 31–133, 134–242, 243–343, 344–448, 449–558, and 566–671; these read EQIR…TPKF, TQNS…PPVF, NRDV…SPEV, TFHS…APVF, HQAS…APRV, and DGSA…LPDI. At 31–687 the chain is on the extracellular side; sequence EQIRYRIPEE…SDPQAELQFY (657 aa). N-linked (GlcNAc...) asparagine glycans are attached at residues asparagine 415 and asparagine 541. A helical membrane pass occupies residues 688-708; sequence LVVALALISVLFLLAVILAIA. The Cytoplasmic portion of the chain corresponds to 709–923; that stretch reads LRLRRSSSPA…KKKSGKKEKK (215 aa). 2 disordered regions span residues 794–832 and 893–923; these read TSHP…WPNN and ATLT…KEKK. Polar residues predominate over residues 807 to 832; it reads WRFSQAQRPGTSGSQNGDDTGTWPNN. The segment covering 913–923 has biased composition (basic residues); that stretch reads NKKKSGKKEKK.

The protein localises to the cell membrane. In terms of biological role, potential calcium-dependent cell-adhesion protein. May be involved in the establishment and maintenance of specific neuronal connections in the brain. In Pan troglodytes (Chimpanzee), this protein is Protocadherin gamma-B5 (PCDHGB5).